Here is a 124-residue protein sequence, read N- to C-terminus: Small ribosomal subunit protein bS6 (124 aa).

The interval 96-124 (ETGPSPMMKEVQREEAKKSAATQPSEAQA) is disordered. Residues 115–124 (AATQPSEAQA) are compositionally biased toward polar residues.

Belongs to the bacterial ribosomal protein bS6 family.

Binds together with bS18 to 16S ribosomal RNA. The sequence is that of Small ribosomal subunit protein bS6 from Paraburkholderia phytofirmans (strain DSM 17436 / LMG 22146 / PsJN) (Burkholderia phytofirmans).